The chain runs to 441 residues: Histidine--tRNA ligase (441 aa).

It belongs to the class-II aminoacyl-tRNA synthetase family. As to quaternary structure, homodimer.

The protein localises to the cytoplasm. It carries out the reaction tRNA(His) + L-histidine + ATP = L-histidyl-tRNA(His) + AMP + diphosphate + H(+). This Synechococcus sp. (strain WH7803) protein is Histidine--tRNA ligase.